Here is a 140-residue protein sequence, read N- to C-terminus: Putative ABC transporter permease protein ORF1 (140 aa).

Positions 1-133 (DPNVAFYSVV…ITTAGIFAYF (133 aa)) constitute an ABC transmembrane type-1 domain. The next 3 membrane-spanning stretches (helical) occupy residues 9 to 29 (VVAVICWQYIPFYMIFFIAAL), 65 to 85 (TACILSLIGSLKYFDLIYVMT), and 115 to 135 (TIASAMFLIITTAGIFAYFVT).

It belongs to the binding-protein-dependent transport system permease family. MalFG subfamily.

The protein localises to the cell membrane. In terms of biological role, may play a role in sugar transport. The protein is Putative ABC transporter permease protein ORF1 of Caldicellulosiruptor sp. (strain Rt8B.4).